The sequence spans 295 residues: 4-hydroxy-tetrahydrodipicolinate synthase (295 aa).

Residue Thr46 coordinates pyruvate. Tyr134 (proton donor/acceptor) is an active-site residue. The active-site Schiff-base intermediate with substrate is Lys162. A pyruvate-binding site is contributed by Ile205.

Belongs to the DapA family. Homotetramer; dimer of dimers.

It is found in the cytoplasm. The enzyme catalyses L-aspartate 4-semialdehyde + pyruvate = (2S,4S)-4-hydroxy-2,3,4,5-tetrahydrodipicolinate + H2O + H(+). It functions in the pathway amino-acid biosynthesis; L-lysine biosynthesis via DAP pathway; (S)-tetrahydrodipicolinate from L-aspartate: step 3/4. Catalyzes the condensation of (S)-aspartate-beta-semialdehyde [(S)-ASA] and pyruvate to 4-hydroxy-tetrahydrodipicolinate (HTPA). The polypeptide is 4-hydroxy-tetrahydrodipicolinate synthase (Anaeromyxobacter sp. (strain Fw109-5)).